Reading from the N-terminus, the 449-residue chain is tRNA-2-methylthio-N(6)-dimethylallyladenosine synthase (449 aa).

Residues 7 to 124 (DAFYIHTFGC…LPLLIKQVQQ (118 aa)) enclose the MTTase N-terminal domain. Positions 16, 52, 87, 163, 167, and 170 each coordinate [4Fe-4S] cluster. The Radical SAM core domain maps to 149–379 (RSSSMSAFVP…IECQNRISAS (231 aa)). In terms of domain architecture, TRAM spans 382-445 (SQAVGSVVEV…SATLLGEPLI (64 aa)).

This sequence belongs to the methylthiotransferase family. MiaB subfamily. In terms of assembly, monomer. [4Fe-4S] cluster is required as a cofactor.

Its subcellular location is the cytoplasm. The enzyme catalyses N(6)-dimethylallyladenosine(37) in tRNA + (sulfur carrier)-SH + AH2 + 2 S-adenosyl-L-methionine = 2-methylsulfanyl-N(6)-dimethylallyladenosine(37) in tRNA + (sulfur carrier)-H + 5'-deoxyadenosine + L-methionine + A + S-adenosyl-L-homocysteine + 2 H(+). Functionally, catalyzes the methylthiolation of N6-(dimethylallyl)adenosine (i(6)A), leading to the formation of 2-methylthio-N6-(dimethylallyl)adenosine (ms(2)i(6)A) at position 37 in tRNAs that read codons beginning with uridine. This Chlorobium chlorochromatii (strain CaD3) protein is tRNA-2-methylthio-N(6)-dimethylallyladenosine synthase.